We begin with the raw amino-acid sequence, 183 residues long: Potassium-transporting ATPase KdpC subunit (183 aa).

Residues 11-31 (LILLLAVVTGALYPLAVTGVA) form a helical membrane-spanning segment.

It belongs to the KdpC family. The system is composed of three essential subunits: KdpA, KdpB and KdpC.

It is found in the cell inner membrane. Its function is as follows. Part of the high-affinity ATP-driven potassium transport (or Kdp) system, which catalyzes the hydrolysis of ATP coupled with the electrogenic transport of potassium into the cytoplasm. This subunit acts as a catalytic chaperone that increases the ATP-binding affinity of the ATP-hydrolyzing subunit KdpB by the formation of a transient KdpB/KdpC/ATP ternary complex. The polypeptide is Potassium-transporting ATPase KdpC subunit (Pseudomonas putida (strain W619)).